A 730-amino-acid polypeptide reads, in one-letter code: Wall-associated receptor kinase-like 3 (730 aa).

An N-terminal signal peptide occupies residues 1-25 (MKTKTYNFRYIVASVLTLLMNGSSA). Residues 26–357 (ATPPNSNSSS…AKLAHVLRGV (332 aa)) lie on the Extracellular side of the membrane. N-linked (GlcNAc...) asparagine glycans are attached at residues Asn32, Asn38, Asn68, Asn90, Asn119, Asn132, Asn212, Asn233, and Asn269. The interval 283–340 (CLCRYGYFSRMSYRSCYCGSGYRGNPYIRGGCIDIDECEVPNKCGEDTCVNMAGRYSC) is atypical EGF-like. Cystine bridges form between Cys285/Cys298, Cys320/Cys331, and Cys326/Cys340. Residues 358–378 (LIGLLGLLFFVIGIFGLYKFI) form a helical membrane-spanning segment. The Cytoplasmic segment spans residues 379–730 (RKRRRIIRSM…LMEINRIYDS (352 aa)). One can recognise a Protein kinase domain in the interval 428–699 (FSIDRVLGQG…REVSIKLERI (272 aa)). ATP-binding positions include 434-442 (LGQGGQGTV) and Lys456. The active-site Proton acceptor is the Asp553. The tract at residues 703–730 (PKDLDVHTENEEEEEEDQLMEINRIYDS) is disordered. The segment covering 712-721 (NEEEEEEDQL) has biased composition (acidic residues).

This sequence belongs to the protein kinase superfamily. Ser/Thr protein kinase family. In terms of tissue distribution, preferentially expressed in roots and flowers.

The protein resides in the membrane. The enzyme catalyses L-seryl-[protein] + ATP = O-phospho-L-seryl-[protein] + ADP + H(+). The catalysed reaction is L-threonyl-[protein] + ATP = O-phospho-L-threonyl-[protein] + ADP + H(+). Its function is as follows. Serine/threonine-protein kinase that may function as a signaling receptor of extracellular matrix component. This Arabidopsis thaliana (Mouse-ear cress) protein is Wall-associated receptor kinase-like 3 (WAKL3).